Reading from the N-terminus, the 454-residue chain is Cholesterol 7-desaturase nvd (454 aa).

Transmembrane regions (helical) follow at residues 13-33 (VLCP…LGAG) and 47-67 (TTLS…LWGW). One can recognise a Rieske domain in the interval 117-221 (WYRALDSHLL…SCELNGMVFV (105 aa)). The [2Fe-2S] cluster site is built by Cys158, His160, Cys178, and His181.

It belongs to the cholesterol 7-desaturase family. [2Fe-2S] cluster is required as a cofactor.

It is found in the membrane. It catalyses the reaction cholesterol + NADPH + O2 + H(+) = 7-dehydrocholesterol + NADP(+) + 2 H2O. The enzyme catalyses cholesterol + NADH + O2 + H(+) = 7-dehydrocholesterol + NAD(+) + 2 H2O. The protein operates within steroid hormone biosynthesis; dafachronic acid biosynthesis. Catalyzes the production of 7-dehydrocholesterol (7-DHC or cholesta-5,7-dien-3beta-ol) by inserting a double bond (desaturating) at the C7-C8 single bond of cholesterol. This reaction is the first step in the synthesis of the steroid hormone Delta(7)-dafachronic acid. This chain is Cholesterol 7-desaturase nvd (nvd), found in Xenopus laevis (African clawed frog).